The following is a 504-amino-acid chain: Anaerobic nitric oxide reductase transcription regulator NorR (504 aa).

4-aspartylphosphate is present on Asp-57. One can recognise a Sigma-54 factor interaction domain in the interval 187–416 (MIGLSPGMTQ…LEHAIHRAVV (230 aa)). ATP contacts are provided by residues 215–222 (GETGTGKE) and 278–287 (ADNGTLFLDE). The segment at residues 479–498 (WAACARMLETDVANLHRLAK) is a DNA-binding region (H-T-H motif).

Its pathway is nitrogen metabolism; nitric oxide reduction. Its function is as follows. Required for the expression of anaerobic nitric oxide (NO) reductase, acts as a transcriptional activator for at least the norVW operon. Activation also requires sigma-54. In Escherichia coli (strain K12 / MC4100 / BW2952), this protein is Anaerobic nitric oxide reductase transcription regulator NorR.